Reading from the N-terminus, the 85-residue chain is MVKLFVIVILALIAVAFGQHGHGGQDQHGYGHGQQAVYGKGHEGHGVNNLGQDGHGQHGYAHGHSDQHGHGGQHGQHDGYKNRGY.

A signal peptide spans 1 to 18 (MVKLFVIVILALIAVAFG). 2 tandem repeats follow at residues 19–25 (QHGHGGQ) and 67–73 (QHGHGGQ). Residues 19 to 73 (QHGHGGQDQHGYGHGQQAVYGKGHEGHGVNNLGQDGHGQHGYAHGHSDQHGHGGQ) are 2 X 7 AA repeats of Q-H-G-H-G-G-Q. Residues 22–32 (HGGQDQHGYGH) show a composition bias toward gly residues. The disordered stretch occupies residues 22–85 (HGGQDQHGYG…QHDGYKNRGY (64 aa)). Residues 63 to 85 (GHSDQHGHGGQHGQHDGYKNRGY) show a composition bias toward basic and acidic residues.

In terms of assembly, homodimer. Post-translationally, the N-terminus is blocked. Hemolymph.

Functionally, this protein inhibits the growth of a variety of fungal species. The antifungal activity of this protein is enhanced by the presence of sarcotoxin IA. The sequence is that of Antifungal protein from Sarcophaga peregrina (Flesh fly).